We begin with the raw amino-acid sequence, 143 residues long: Hemoglobin subunit alpha-1 (143 aa).

Ser-2 is subject to N-acetylserine. One can recognise a Globin domain in the interval 2 to 143; the sequence is SLSSKDKATV…LALALAEKYR (142 aa). Position 60 (His-60) interacts with O2. Position 89 (His-89) interacts with heme b.

The protein belongs to the globin family. As to quaternary structure, hb 1 is a heterotetramer of two alpha-1 and two beta-1 chains. Red blood cells.

In terms of biological role, involved in oxygen transport from gills to the various peripheral tissues. The sequence is that of Hemoglobin subunit alpha-1 (hba1) from Arctogadus glacialis (Arctic cod).